We begin with the raw amino-acid sequence, 103 residues long: Large ribosomal subunit protein uL24 (103 aa).

This sequence belongs to the universal ribosomal protein uL24 family. Part of the 50S ribosomal subunit.

In terms of biological role, one of two assembly initiator proteins, it binds directly to the 5'-end of the 23S rRNA, where it nucleates assembly of the 50S subunit. One of the proteins that surrounds the polypeptide exit tunnel on the outside of the subunit. The protein is Large ribosomal subunit protein uL24 of Haemophilus influenzae (strain PittEE).